The primary structure comprises 122 residues: Large ribosomal subunit protein uL14 (122 aa).

It belongs to the universal ribosomal protein uL14 family. As to quaternary structure, part of the 50S ribosomal subunit. Forms a cluster with proteins L3 and L19. In the 70S ribosome, L14 and L19 interact and together make contacts with the 16S rRNA in bridges B5 and B8.

In terms of biological role, binds to 23S rRNA. Forms part of two intersubunit bridges in the 70S ribosome. In Rubrobacter xylanophilus (strain DSM 9941 / JCM 11954 / NBRC 16129 / PRD-1), this protein is Large ribosomal subunit protein uL14.